Reading from the N-terminus, the 461-residue chain is Argininosuccinate lyase (461 aa).

Belongs to the lyase 1 family. Argininosuccinate lyase subfamily.

Its subcellular location is the cytoplasm. The catalysed reaction is 2-(N(omega)-L-arginino)succinate = fumarate + L-arginine. Its pathway is amino-acid biosynthesis; L-arginine biosynthesis; L-arginine from L-ornithine and carbamoyl phosphate: step 3/3. Strongly inhibited by L-arginine. Inhibitory effects are lowered at pH 7.0 compared to those at pH 8.0. At 42 degrees Celsius and pH 8.0, activity decreases to 77% and 25% in the presence of 1 mM and 10 mM arginine, respectively. The other amino and organic acids do not affect activity. Functionally, catalyzes the last step of arginine biosynthesis, the conversion of argininosuccinate into L-arginine and fumarate. The chain is Argininosuccinate lyase from Nostoc sp. (strain PCC 7120 / SAG 25.82 / UTEX 2576).